A 367-amino-acid chain; its full sequence is Peptide chain release factor 2 (367 aa).

The residue at position 249 (Q249) is an N5-methylglutamine.

The protein belongs to the prokaryotic/mitochondrial release factor family. In terms of processing, methylated by PrmC. Methylation increases the termination efficiency of RF2.

The protein resides in the cytoplasm. Peptide chain release factor 2 directs the termination of translation in response to the peptide chain termination codons UGA and UAA. The chain is Peptide chain release factor 2 from Thermotoga sp. (strain RQ2).